The primary structure comprises 80 residues: Acyl carrier protein (80 aa).

Positions 4–79 (EAILEKVRSI…DAVKYIEDKQ (76 aa)) constitute a Carrier domain. Residue Ser-39 is modified to O-(pantetheine 4'-phosphoryl)serine.

This sequence belongs to the acyl carrier protein (ACP) family. 4'-phosphopantetheine is transferred from CoA to a specific serine of apo-ACP by AcpS. This modification is essential for activity because fatty acids are bound in thioester linkage to the sulfhydryl of the prosthetic group.

The protein resides in the cytoplasm. The protein operates within lipid metabolism; fatty acid biosynthesis. Functionally, carrier of the growing fatty acid chain in fatty acid biosynthesis. This Prochlorococcus marinus (strain MIT 9313) protein is Acyl carrier protein.